We begin with the raw amino-acid sequence, 670 residues long: MKVSSQTPGELSKKKFELLHDARYWDSPQFKLISGFEPKGSQPQAIEKLVEGLKKREQFQTLLGVTGSGKTYTVANVINQIRKPTLVIAHNKTLAAQLYNEFREFFPENRVEYFVSYYDYYQPESYLPAKDQYIEKDAQINPKIEQMRLAATASLMSRQDVIVVASVSCIYGLGNPENFQKMGFELKVGDKVQRKEILEKLIDIQFERNDMELMPGRFRVKGDTIDIIPGYFDDIIRVELFGDEVDRISEVDKQTGQRKEDMDYFFVYPARHYVIPEEEQKSAIRSILEELEEHLPTLGLLESHRLKQRTLYDMEMIEETGSCKGIENYSRHFDHRQPGEQPFCLLDYFPEDFLLIIDESHQTIPQLHGMYNGDRSRKKSLVDYGFRLPSAYDNRPLKFEEFEKYMENVIFVSATPSDYEREHSARIVEQIIRPTGLVDPEVEVRPLEGQVRDVMQEIRKIVDRGDRALVTTLTKKLAEELTEFLARNEIKARYLHSDIKTIERTEIIRELRLGKFDVLVGINLLREGLDIPEVGFIGILDADKEGFLRDSKSLIQIIGRAARNSSSKVVLYADNMTESIKKAVDETERRRSMQIAYNEEHGIVPKTIRKPIREKVVDITDTKHIPKTDIPNVIIELDAEMREAADRLDFERAIQLRELIKKLEKEVKAV.

One can recognise a Helicase ATP-binding domain in the interval 51-433 (EGLKKREQFQ…SARIVEQIIR (383 aa)). 64 to 71 (GVTGSGKT) contributes to the ATP binding site. A Beta-hairpin motif is present at residues 117 to 140 (YYDYYQPESYLPAKDQYIEKDAQI). Residues 453-612 (DVMQEIRKIV…IVPKTIRKPI (160 aa)) enclose the Helicase C-terminal domain. The UVR domain occupies 631–666 (PNVIIELDAEMREAADRLDFERAIQLRELIKKLEKE).

The protein belongs to the UvrB family. As to quaternary structure, forms a heterotetramer with UvrA during the search for lesions. Interacts with UvrC in an incision complex.

It is found in the cytoplasm. Its function is as follows. The UvrABC repair system catalyzes the recognition and processing of DNA lesions. A damage recognition complex composed of 2 UvrA and 2 UvrB subunits scans DNA for abnormalities. Upon binding of the UvrA(2)B(2) complex to a putative damaged site, the DNA wraps around one UvrB monomer. DNA wrap is dependent on ATP binding by UvrB and probably causes local melting of the DNA helix, facilitating insertion of UvrB beta-hairpin between the DNA strands. Then UvrB probes one DNA strand for the presence of a lesion. If a lesion is found the UvrA subunits dissociate and the UvrB-DNA preincision complex is formed. This complex is subsequently bound by UvrC and the second UvrB is released. If no lesion is found, the DNA wraps around the other UvrB subunit that will check the other stand for damage. In Methanosarcina acetivorans (strain ATCC 35395 / DSM 2834 / JCM 12185 / C2A), this protein is UvrABC system protein B.